The following is a 183-amino-acid chain: UPF0316 protein GTNG_0803 (183 aa).

3 helical membrane passes run Ile-5 to Phe-25, Leu-33 to Phe-53, and Tyr-59 to Ile-79.

The protein belongs to the UPF0316 family.

It localises to the cell membrane. The sequence is that of UPF0316 protein GTNG_0803 from Geobacillus thermodenitrificans (strain NG80-2).